A 459-amino-acid chain; its full sequence is Alpha-N-acetylgalactosaminidase (459 aa).

Residues 1 to 31 constitute a signal peptide (tat-type signal); it reads MHNIHRRHFLKAAGAVTAGLVTANIALNANA. Residues 64–65, Asp86, 135–138, 155–156, and Asn184 each bind NAD(+); these read ER, WEWH, and EV. Residues Tyr213, Arg232, 244–247, and Tyr326 each bind substrate; that span reads YPTH. Position 244 (Tyr244) interacts with NAD(+).

Belongs to the Gfo/Idh/MocA family. Glycosyl hydrolase 109 subfamily. It depends on NAD(+) as a cofactor. Predicted to be exported by the Tat system. The position of the signal peptide cleavage has not been experimentally proven.

It carries out the reaction Cleavage of non-reducing alpha-(1-&gt;3)-N-acetylgalactosamine residues from human blood group A and AB mucin glycoproteins, Forssman hapten and blood group A lacto series glycolipids.. In terms of biological role, glycosidase that has specific alpha-N-acetylgalactosaminidase activity. This chain is Alpha-N-acetylgalactosaminidase (nagA), found in Shewanella oneidensis (strain ATCC 700550 / JCM 31522 / CIP 106686 / LMG 19005 / NCIMB 14063 / MR-1).